Consider the following 65-residue polypeptide: Crotamine (65 aa).

Positions 1 to 22 (MKILYLLFAFLFLAFLSEPGNA) are cleaved as a signal peptide. 2 short sequence motifs (nuclear localization signal) span residues 24-40 (KQCHKKGGHCFPKEKIC) and 49-61 (KMDCRWRWKCCKK). Disulfide bonds link Cys-26-Cys-58, Cys-33-Cys-52, and Cys-40-Cys-59.

This sequence belongs to the crotamine-myotoxin family. Monomer. In terms of tissue distribution, expressed by the venom gland.

It localises to the secreted. Its function is as follows. Cationic peptide that possesses multiple functions. It acts as a cell-penetrating peptide (CPP), and as a potent voltage-gated potassium channel inhibitor. It exhibits antimicrobial activities, hind limb paralysis, and severe muscle necrosis by a non-enzymatic mechanism. As a cell-penetrating peptide, crotamine has high specificity for actively proliferating cells, and interacts inside the cell with subcellular and subnuclear structures, like vesicular compartments, chromosomes and centrioles. It penetrates into the cells as fast as five minutes after its addition to cell culture medium. In vivo, after intraperitoneal administration, it is found in cells of peritoneal fluid and bone marrow, demonstrating preferential nuclear and perinuclear localization. To enter the cell, it interacts with the chains of heparan sulfate membrane proteoglycan (HSPG), and is endocytosed (in complex with HSPG) in vesicles which are transported into the cell with the help of clathrin. Inside the cell, crotamine accumulates in lysosomal vesicles. As soon as the peptide accumulates in endosomes/lysosomes vesicles, these compartments are disrupted and their contents released into the cytosol. This loss of lysosomal content induces cell death at high concentrations, or promotes the distribution of crotamine in cytoplasmic compartments, which is a step before crotamine nuclear uptake. As a potassium channel inhibitor, this toxin selectively inhibits Kv1.1/KCNA1, Kv1.2/KCNA2 and Kv1.3/KCNA3 channels with an IC(50) of 369, 386 and 287 nM, respectively. The inhibition of Kv1.3/KCNA channels induced by this toxin occurs rapidly and is voltage-independent. The channel inhibition is reversible after washing, suggesting a pure and classical channel blockage effect, without effects in potassium channel kinetics. As an antimicrobial peptide, crotamine shows antibacterial activity against E.coli and B.subtilis, and antifungal activity against Candida spp., Trichosporon spp. and C.neoformans. It kills bacteria through membrane permeabilization. The protein is Crotamine (CRO2) of Crotalus durissus terrificus (South American rattlesnake).